Consider the following 174-residue polypeptide: Nucleoside-triphosphatase THEP1 (174 aa).

Residues G7–T14 and L94–G101 contribute to the ATP site.

Belongs to the THEP1 NTPase family.

It catalyses the reaction a ribonucleoside 5'-triphosphate + H2O = a ribonucleoside 5'-diphosphate + phosphate + H(+). Its function is as follows. Has nucleotide phosphatase activity towards ATP, GTP, CTP, TTP and UTP. May hydrolyze nucleoside diphosphates with lower efficiency. This is Nucleoside-triphosphatase THEP1 from Thermotoga sp. (strain RQ2).